A 113-amino-acid chain; its full sequence is Dolichyl-diphosphooligosaccharide--protein glycosyltransferase subunit DAD1 (113 aa).

Residues 1–30 (MGSSAFEVLTFFLKDYKANTPQKLKIIDAY) are Cytoplasmic-facing. Residues 31–51 (LLYILLTGINQFLYCCLVGTF) traverse the membrane as a helical segment. P52 is a topological domain (lumenal). A helical membrane pass occupies residues 53–73 (FNSFLSGFISCVASFVLGVCL). The Cytoplasmic segment spans residues 74–92 (RLQVNPQNSSNFCGIPPER). A helical membrane pass occupies residues 93-113 (AFADFIFAHVVLHLVVMNFIG).

This sequence belongs to the DAD/OST2 family. Component of the oligosaccharyltransferase (OST) complex. In terms of tissue distribution, widely expressed. Greatest expression seen in the epidermis, intermediate expression in the fat body and midgut and mild expression observed in the silk gland.

The protein resides in the endoplasmic reticulum membrane. It functions in the pathway protein modification; protein glycosylation. Its function is as follows. Subunit of the oligosaccharyl transferase (OST) complex that catalyzes the initial transfer of a defined glycan (Glc(3)Man(9)GlcNAc(2) in eukaryotes) from the lipid carrier dolichol-pyrophosphate to an asparagine residue within an Asn-X-Ser/Thr consensus motif in nascent polypeptide chains, the first step in protein N-glycosylation. N-glycosylation occurs cotranslationally and the complex associates with the Sec61 complex at the channel-forming translocon complex that mediates protein translocation across the endoplasmic reticulum (ER). All subunits are required for a maximal enzyme activity. The polypeptide is Dolichyl-diphosphooligosaccharide--protein glycosyltransferase subunit DAD1 (Araneus ventricosus (Orbweaver spider)).